A 77-amino-acid chain; its full sequence is Small ribosomal subunit protein uS17 (77 aa).

Belongs to the universal ribosomal protein uS17 family. In terms of assembly, part of the 30S ribosomal subunit.

In terms of biological role, one of the primary rRNA binding proteins, it binds specifically to the 5'-end of 16S ribosomal RNA. The polypeptide is Small ribosomal subunit protein uS17 (Rickettsia rickettsii (strain Sheila Smith)).